The primary structure comprises 85 residues: MNLPLLLLITILIEIHALKDGYVIYKNSNCKYSCNINEKWKYCSPLCQKKHGKTGYCYFFACWCTDLPNDVPIYGETGSYCWSNK.

Positions 1 to 17 are cleaved as a signal peptide; sequence MNLPLLLLITILIEIHA. The region spanning 19–82 is the LCN-type CS-alpha/beta domain; sequence KDGYVIYKNS…IYGETGSYCW (64 aa). Cystine bridges form between C30/C81, C34/C57, C43/C62, and C47/C64.

It belongs to the long (4 C-C) scorpion toxin superfamily. Sodium channel inhibitor family. In terms of tissue distribution, expressed by the venom gland.

It is found in the secreted. Putative sodium channel toxin. This chain is Putative sodium channel toxin Ts34, found in Tityus serrulatus (Brazilian scorpion).